The chain runs to 101 residues: Small ribosomal subunit protein uS10 (101 aa).

The protein belongs to the universal ribosomal protein uS10 family. In terms of assembly, part of the 30S ribosomal subunit.

Its function is as follows. Involved in the binding of tRNA to the ribosomes. The protein is Small ribosomal subunit protein uS10 of Amoebophilus asiaticus (strain 5a2).